The primary structure comprises 93 residues: Pyrimidine/purine nucleoside phosphorylase (93 aa).

The protein belongs to the nucleoside phosphorylase PpnP family.

The enzyme catalyses a purine D-ribonucleoside + phosphate = a purine nucleobase + alpha-D-ribose 1-phosphate. The catalysed reaction is adenosine + phosphate = alpha-D-ribose 1-phosphate + adenine. It catalyses the reaction cytidine + phosphate = cytosine + alpha-D-ribose 1-phosphate. It carries out the reaction guanosine + phosphate = alpha-D-ribose 1-phosphate + guanine. The enzyme catalyses inosine + phosphate = alpha-D-ribose 1-phosphate + hypoxanthine. The catalysed reaction is thymidine + phosphate = 2-deoxy-alpha-D-ribose 1-phosphate + thymine. It catalyses the reaction uridine + phosphate = alpha-D-ribose 1-phosphate + uracil. It carries out the reaction xanthosine + phosphate = alpha-D-ribose 1-phosphate + xanthine. Its function is as follows. Catalyzes the phosphorolysis of diverse nucleosides, yielding D-ribose 1-phosphate and the respective free bases. Can use uridine, adenosine, guanosine, cytidine, thymidine, inosine and xanthosine as substrates. Also catalyzes the reverse reactions. The protein is Pyrimidine/purine nucleoside phosphorylase of Cellvibrio japonicus (strain Ueda107) (Pseudomonas fluorescens subsp. cellulosa).